A 248-amino-acid polypeptide reads, in one-letter code: Chitin deacetylase (248 aa).

The signal sequence occupies residues 1-26; the sequence is MHFSTLFGAAATAALAGSTNASPLAR. 2 disulfide bridges follow: Cys38/Cys237 and Cys148/Cys152. In terms of domain architecture, NodB homology spans 42 to 232; the sequence is GLVALTYDDG…TLKSKGYRAV (191 aa). The Proton acceptor role is filled by Asp49. Asp49 is a binding site for acetate. Co(2+) contacts are provided by Asp50, His104, and His108. Tyr145 contacts acetate. The Proton donor role is filled by His206.

It belongs to the polysaccharide deacetylase family. In terms of assembly, monomer. Co(2+) is required as a cofactor. In terms of processing, N-glycosylated.

It is found in the secreted. The catalysed reaction is [(1-&gt;4)-N-acetyl-beta-D-glucosaminyl](n) + n H2O = chitosan + n acetate. Functionally, hydrolyzes the N-acetamido groups of N-acetyl-D-glucosamine polymers in chitin to form chitosan and acetate. May play a role in evasion of the host immune response; plant chitinases liberate chitin molecules from the fungal cell wall which act as elicitors of the plant immune response, deacetylation of the liberated chitin neutralizes elicitor activity. This is Chitin deacetylase from Colletotrichum lindemuthianum (Bean anthracnose fungus).